The primary structure comprises 380 residues: Large ribosomal subunit protein mL38 (380 aa).

Residues 1–26 (MAAPWWRVVLNGSRNWRGFSTSAALS) constitute a mitochondrion transit peptide. Positions 101-122 (QQLLERKRVLRELRTSVEEERA) form a coiled coil.

It belongs to the phosphatidylethanolamine-binding protein family. Mitochondrion-specific ribosomal protein mL38 subfamily. In terms of assembly, component of the mitochondrial ribosome large subunit (39S) which comprises a 16S rRNA and about 50 distinct proteins.

It localises to the mitochondrion. This is Large ribosomal subunit protein mL38 (MRPL38) from Bos taurus (Bovine).